The sequence spans 651 residues: Beta-mannosyltransferase 7 (651 aa).

The Cytoplasmic portion of the chain corresponds to 1–19; the sequence is MKLEMSSYLHKVPNTGITN. A helical membrane pass occupies residues 20–42; it reads LSNSKSIVFIMFCATLLFIITSS. The Extracellular portion of the chain corresponds to 43–651; that stretch reads RYLTGSESLG…VKIDEKSEET (609 aa). N-linked (GlcNAc...) asparagine glycans are attached at residues Asn271 and Asn423.

The protein belongs to the BMT family.

The protein localises to the membrane. Beta-mannosyltransferase involved in cell wall biosynthesis through beta-1,2-mannosylation of cell wall phosphopeptidomannan. The chain is Beta-mannosyltransferase 7 (BMT7) from Candida albicans (strain SC5314 / ATCC MYA-2876) (Yeast).